Here is a 276-residue protein sequence, read N- to C-terminus: Monoglyceride lipase homolog (276 aa).

Belongs to the orthopoxvirus OPG043 family.

The protein is Monoglyceride lipase homolog (OPG043) of Cynomys gunnisoni (Gunnison's prairie dog).